The primary structure comprises 336 residues: Glycerol-3-phosphate dehydrogenase [NAD(P)+] (336 aa).

Residues S13, W14, R34, and K108 each coordinate NADPH. 3 residues coordinate sn-glycerol 3-phosphate: K108, G138, and S140. A142 is an NADPH binding site. Positions 193, 246, 256, 257, and 258 each coordinate sn-glycerol 3-phosphate. Residue K193 is the Proton acceptor of the active site. R257 lines the NADPH pocket. Residues V281 and E283 each coordinate NADPH.

This sequence belongs to the NAD-dependent glycerol-3-phosphate dehydrogenase family.

The protein resides in the cytoplasm. The catalysed reaction is sn-glycerol 3-phosphate + NAD(+) = dihydroxyacetone phosphate + NADH + H(+). The enzyme catalyses sn-glycerol 3-phosphate + NADP(+) = dihydroxyacetone phosphate + NADPH + H(+). The protein operates within membrane lipid metabolism; glycerophospholipid metabolism. Catalyzes the reduction of the glycolytic intermediate dihydroxyacetone phosphate (DHAP) to sn-glycerol 3-phosphate (G3P), the key precursor for phospholipid synthesis. The chain is Glycerol-3-phosphate dehydrogenase [NAD(P)+] from Carboxydothermus hydrogenoformans (strain ATCC BAA-161 / DSM 6008 / Z-2901).